Here is a 725-residue protein sequence, read N- to C-terminus: N-alpha-acetyltransferase 35, NatC auxiliary subunit (725 aa).

Ser187 is subject to Phosphoserine. The interval Glu548–Ser573 is disordered. Residues Arg558–Pro571 show a composition bias toward basic residues.

It belongs to the MAK10 family. In terms of assembly, component of the N-terminal acetyltransferase C (NatC) complex, which is composed of NAA35, NAA38 and NAA30.

The protein resides in the cytoplasm. In terms of biological role, auxillary component of the N-terminal acetyltransferase C (NatC) complex which catalyzes acetylation of N-terminal methionine residues. N-terminal acetylation protects proteins from ubiquitination and degradation by the N-end rule pathway. Involved in regulation of apoptosis and proliferation of smooth muscle cells. This Macaca fascicularis (Crab-eating macaque) protein is N-alpha-acetyltransferase 35, NatC auxiliary subunit (NAA35).